A 339-amino-acid polypeptide reads, in one-letter code: Ketol-acid reductoisomerase (NADP(+)) (339 aa).

The 182-residue stretch at 1–182 folds into the KARI N-terminal Rossmann domain; sequence MRVYYDRDAD…GGGRAGIIET (182 aa). NADP(+)-binding positions include 24 to 27, Arg-48, Ser-51, Ser-53, and 83 to 86; these read YGSQ and DELQ. The active site involves His-108. Gly-134 contacts NADP(+). The 146-residue stretch at 183-328 folds into the KARI C-terminal knotted domain; the sequence is TFREECETDL…AKLRDMMPWI (146 aa). Asp-191, Glu-195, Glu-227, and Glu-231 together coordinate Mg(2+). Ser-252 serves as a coordination point for substrate.

It belongs to the ketol-acid reductoisomerase family. It depends on Mg(2+) as a cofactor.

It catalyses the reaction (2R)-2,3-dihydroxy-3-methylbutanoate + NADP(+) = (2S)-2-acetolactate + NADPH + H(+). It carries out the reaction (2R,3R)-2,3-dihydroxy-3-methylpentanoate + NADP(+) = (S)-2-ethyl-2-hydroxy-3-oxobutanoate + NADPH + H(+). It functions in the pathway amino-acid biosynthesis; L-isoleucine biosynthesis; L-isoleucine from 2-oxobutanoate: step 2/4. Its pathway is amino-acid biosynthesis; L-valine biosynthesis; L-valine from pyruvate: step 2/4. Involved in the biosynthesis of branched-chain amino acids (BCAA). Catalyzes an alkyl-migration followed by a ketol-acid reduction of (S)-2-acetolactate (S2AL) to yield (R)-2,3-dihydroxy-isovalerate. In the isomerase reaction, S2AL is rearranged via a Mg-dependent methyl migration to produce 3-hydroxy-3-methyl-2-ketobutyrate (HMKB). In the reductase reaction, this 2-ketoacid undergoes a metal-dependent reduction by NADPH to yield (R)-2,3-dihydroxy-isovalerate. The sequence is that of Ketol-acid reductoisomerase (NADP(+)) from Rhodopseudomonas palustris (strain ATCC BAA-98 / CGA009).